The following is a 495-amino-acid chain: Protein adenylyltransferase Fic (495 aa).

The interval 1–23 (MGTEAEPPSPPSPPAQQQEQANP) is disordered. A helical transmembrane segment spans residues 36–58 (LYRLVLFFIAGSLTAWMFHAFSS). TPR repeat units follow at residues 121–154 (ALVSLRMAQDMYLTGKDDKAARLFEHALALAPRH) and 155–189 (PEVLLRYGEFLEHNQRNIVLADQYYFQALTISPSN). Positions 246–251 (SVGIEG) match the Inhibitory (S/T)XXXE(G/N) motif motif. Residues Glu250 and 331–334 (VGGH) contribute to the ATP site. The Fido domain maps to 300-435 (ITIKDILELH…IRPFVRFIAD (136 aa)). His378 is a catalytic residue. ATP contacts are provided by residues 382–389 (DGNGRTSR), 414–415 (YY), and Asn422.

Belongs to the fic family. As to quaternary structure, homodimer.

The protein localises to the membrane. The enzyme catalyses L-tyrosyl-[protein] + ATP = O-(5'-adenylyl)-L-tyrosyl-[protein] + diphosphate. It catalyses the reaction L-threonyl-[protein] + ATP = 3-O-(5'-adenylyl)-L-threonyl-[protein] + diphosphate. The catalysed reaction is 3-O-(5'-adenylyl)-L-threonyl-[protein] + H2O = L-threonyl-[protein] + AMP + H(+). With respect to regulation, the side chain of Glu-250 determines which of the two opposing activities (AMPylase or de-AMPylase) will take place. In response to endoplasmic reticulum stress, mediates de-AMPylase activity. Adenylyltransferase activity is inhibited by the inhibitory helix present at the N-terminus: Glu-250 binds ATP and competes with ATP-binding at Arg-389, thereby preventing adenylyltransferase activity. In unstressed cells, disengagement of Glu-250 promotes adenylyltransferase activity. Activation dissociates ATP-binding from Glu-250, allowing ordered binding of the entire ATP moiety with the alpha-phosphate in an orientation that is productive for accepting an incoming target hydroxyl side chain. Protein that can both mediate the addition of adenosine 5'-monophosphate (AMP) to specific residues of target proteins (AMPylation), and the removal of the same modification from target proteins (de-AMPylation), depending on the context. The side chain of Glu-250 determines which of the two opposing activities (AMPylase or de-AMPylase) will take place. Acts as a key regulator of the unfolded protein response (UPR) by mediating AMPylation or de-AMPylation of Hsc70-3/BiP. In unstressed cells, acts as an adenylyltransferase by mediating AMPylation of Hsc70-3/BiP at 'Thr-518', thereby inactivating it. In response to endoplasmic reticulum stress, acts as a phosphodiesterase by mediating removal of ATP (de-AMPylation) from Hsc70-3/BiP at 'Thr-518', leading to restore HSPA5/BiP activity. This Drosophila erecta (Fruit fly) protein is Protein adenylyltransferase Fic.